Here is a 252-residue protein sequence, read N- to C-terminus: Imidazole glycerol phosphate synthase subunit HisF (252 aa).

Catalysis depends on residues D11 and D130.

Belongs to the HisA/HisF family. Heterodimer of HisH and HisF.

It localises to the cytoplasm. It carries out the reaction 5-[(5-phospho-1-deoxy-D-ribulos-1-ylimino)methylamino]-1-(5-phospho-beta-D-ribosyl)imidazole-4-carboxamide + L-glutamine = D-erythro-1-(imidazol-4-yl)glycerol 3-phosphate + 5-amino-1-(5-phospho-beta-D-ribosyl)imidazole-4-carboxamide + L-glutamate + H(+). It functions in the pathway amino-acid biosynthesis; L-histidine biosynthesis; L-histidine from 5-phospho-alpha-D-ribose 1-diphosphate: step 5/9. IGPS catalyzes the conversion of PRFAR and glutamine to IGP, AICAR and glutamate. The HisF subunit catalyzes the cyclization activity that produces IGP and AICAR from PRFAR using the ammonia provided by the HisH subunit. The protein is Imidazole glycerol phosphate synthase subunit HisF of Anoxybacillus flavithermus (strain DSM 21510 / WK1).